The following is a 483-amino-acid chain: ATP synthase subunit beta (483 aa).

162–169 (GGAGVGKT) is an ATP binding site.

Belongs to the ATPase alpha/beta chains family. In terms of assembly, F-type ATPases have 2 components, CF(1) - the catalytic core - and CF(0) - the membrane proton channel. CF(1) has five subunits: alpha(3), beta(3), gamma(1), delta(1), epsilon(1). CF(0) has four main subunits: a(1), b(1), b'(1) and c(9-12).

It localises to the cellular thylakoid membrane. It carries out the reaction ATP + H2O + 4 H(+)(in) = ADP + phosphate + 5 H(+)(out). Its function is as follows. Produces ATP from ADP in the presence of a proton gradient across the membrane. The catalytic sites are hosted primarily by the beta subunits. The sequence is that of ATP synthase subunit beta from Prochloron didemni.